The sequence spans 151 residues: Ribosomal RNA large subunit methyltransferase H (151 aa).

S-adenosyl-L-methionine-binding positions include alanine 101 and 119-124 (LSEMTF).

This sequence belongs to the RNA methyltransferase RlmH family. Homodimer.

The protein resides in the cytoplasm. It catalyses the reaction pseudouridine(1915) in 23S rRNA + S-adenosyl-L-methionine = N(3)-methylpseudouridine(1915) in 23S rRNA + S-adenosyl-L-homocysteine + H(+). Its function is as follows. Specifically methylates the pseudouridine at position 1915 (m3Psi1915) in 23S rRNA. The polypeptide is Ribosomal RNA large subunit methyltransferase H (Helicobacter pylori (strain G27)).